A 122-amino-acid polypeptide reads, in one-letter code: uncharacterized protein (122 aa).

2 helical membrane passes run 9–29 and 60–80; these read VATV…STWV and LFSF…CLIM.

It is found in the cytoplasm. The protein localises to the membrane. This is an uncharacterized protein from Schizosaccharomyces pombe (strain 972 / ATCC 24843) (Fission yeast).